The sequence spans 540 residues: Phosphoenolpyruvate carboxykinase (ATP) (540 aa).

Arg67, Tyr207, and Lys213 together coordinate substrate. Residues Lys213, His232, and 248–256 each bind ATP; that span reads GLSGTGKTT. Mn(2+) contacts are provided by Lys213 and His232. Asp269 is a Mn(2+) binding site. Residues Glu297, Arg333, 449–450, and Thr455 each bind ATP; that span reads RI. Arg333 is a substrate binding site.

Belongs to the phosphoenolpyruvate carboxykinase (ATP) family. Monomer. Mn(2+) serves as cofactor.

It is found in the cytoplasm. The catalysed reaction is oxaloacetate + ATP = phosphoenolpyruvate + ADP + CO2. It functions in the pathway carbohydrate biosynthesis; gluconeogenesis. Its function is as follows. Involved in the gluconeogenesis. Catalyzes the conversion of oxaloacetate (OAA) to phosphoenolpyruvate (PEP) through direct phosphoryl transfer between the nucleoside triphosphate and OAA. This Aliivibrio fischeri (strain MJ11) (Vibrio fischeri) protein is Phosphoenolpyruvate carboxykinase (ATP).